The following is a 427-amino-acid chain: Phosphatidylinositol 4-phosphate 5-kinase 10 (427 aa).

Residues 1–419 (MFTREITAKD…RFQDFVSQIF (419 aa)) form the PIPK domain. 2 disordered regions span residues 247 to 287 (SRGS…DSEN) and 334 to 355 (MKIP…VGKQ). The activation loop stretch occupies residues 379–400 (YGVRKRLEHCYKSIQHSSKTIS).

It carries out the reaction a 1,2-diacyl-sn-glycero-3-phospho-(1D-myo-inositol 4-phosphate) + ATP = a 1,2-diacyl-sn-glycero-3-phospho-(1D-myo-inositol-4,5-bisphosphate) + ADP + H(+). The chain is Phosphatidylinositol 4-phosphate 5-kinase 10 (PIP5K10) from Arabidopsis thaliana (Mouse-ear cress).